A 751-amino-acid chain; its full sequence is MTISPPEREGKVKVTVDNDPVPTSFEKWGQPGHFDRTLARGPKTTTWIWNLHANAHDFDSQTSDLEDVSRKIFSAHFGHLAVVFVWLSGMYFHGARFSNYEAWLADPTHIKPSAQVVWPIVGQGILNADVGGGFHGIQITSGFFYLWRASGFTNSYQLYCTAIGGLVMAALMLFAGWFHYHKRAPKLEWFQNVESMMNHHLAGLLGLGSLGWAGHQIHVSLPINKLLDAGVAPADIPLPHEFILDPSKMQELYPSFAKGILPFFTLNWGVYSDFLTFKGGLNPVTGGLWLSDTAHHHLAIAVLFIIAGHMYRTNWGIGHSMKQILEAHKGPFTGEGHKGLYEILTTSWHAQLAINLAMLGSLTIIVAHHMYAMPPYPYQAIDYATQLSLFTHHMWIGGFLIVGAGAHGAIFMVRDYKPSQNVDNLLDRVIRHRDAIISHLNWVCIFLGFHSFGLYVHNDTMRALGRPQDMFSDTAIQLQPIFAQWVQNIHTVAPGATAPNALAPASYAFGGDVVAVAGKVAMMPISLGTADFLVHHIHAFTIHVTVLILLKGVLFARSSRLIPDKGQLGFRFPCDGPGRGGTCQVSGWDHVFLGLFWMYNSLSIVIFHFSWKMQSDVWGSVLPDGTISHITGGNFAQSSITINGWLRDFLWAQAANVINSYGSALSAYGIMFLAGHFVFAFSLMFLFSGRGYWQELIESIVWAHNKLRVAPSIQPRALSIIQGRAVGVTHYLLGGIVTTWAFFLARTLSIQ.

8 helical membrane-spanning segments follow: residues 72 to 95 (IFSAHFGHLAVVFVWLSGMYFHGA), 158 to 181 (LYCTAIGGLVMAALMLFAGWFHYH), 197 to 221 (MNHHLAGLLGLGSLGWAGHQIHVSL), 293 to 311 (TAHHHLAIAVLFIIAGHMY), 348 to 371 (WHAQLAINLAMLGSLTIIVAHHMY), 387 to 413 (LSLFTHHMWIGGFLIVGAGAHGAIFMV), 435 to 457 (AIISHLNWVCIFLGFHSFGLYVH), and 532 to 550 (FLVHHIHAFTIHVTVLILL). [4Fe-4S] cluster is bound by residues C574 and C583. 2 helical membrane passes run 590 to 611 (HVFLGLFWMYNSLSIVIFHFSW) and 665 to 687 (LSAYGIMFLAGHFVFAFSLMFLF). H676 is a chlorophyll a' binding site. The chlorophyll a site is built by M684 and Y692. Residue W693 participates in phylloquinone binding. Residues 725 to 745 (AVGVTHYLLGGIVTTWAFFLA) form a helical membrane-spanning segment.

It belongs to the PsaA/PsaB family. As to quaternary structure, the PsaA/B heterodimer binds the P700 chlorophyll special pair and subsequent electron acceptors. PSI consists of a core antenna complex that captures photons, and an electron transfer chain that converts photonic excitation into a charge separation. The cyanobacterial PSI reaction center is composed of one copy each of PsaA,B,C,D,E,F,I,J,K,L,M and X, and forms trimeric complexes. PSI electron transfer chain: 5 chlorophyll a, 1 chlorophyll a', 2 phylloquinones and 3 4Fe-4S clusters. PSI core antenna: 90 chlorophyll a, 22 carotenoids, 3 phospholipids and 1 galactolipid. P700 is a chlorophyll a/chlorophyll a' dimer, A0 is one or more chlorophyll a, A1 is one or both phylloquinones and FX is a shared 4Fe-4S iron-sulfur center. is required as a cofactor.

Its subcellular location is the cellular thylakoid membrane. It carries out the reaction reduced [plastocyanin] + hnu + oxidized [2Fe-2S]-[ferredoxin] = oxidized [plastocyanin] + reduced [2Fe-2S]-[ferredoxin]. Functionally, psaA and PsaB bind P700, the primary electron donor of photosystem I (PSI), as well as the electron acceptors A0, A1 and FX. PSI is a plastocyanin/cytochrome c6-ferredoxin oxidoreductase, converting photonic excitation into a charge separation, which transfers an electron from the donor P700 chlorophyll pair to the spectroscopically characterized acceptors A0, A1, FX, FA and FB in turn. Oxidized P700 is reduced on the lumenal side of the thylakoid membrane by plastocyanin or cytochrome c6. This chain is Photosystem I P700 chlorophyll a apoprotein A1, found in Gloeothece citriformis (strain PCC 7424) (Cyanothece sp. (strain PCC 7424)).